A 98-amino-acid polypeptide reads, in one-letter code: Defensin-A1 (98 aa).

The N-terminal stretch at 1–19 (MQTLSFLLALLFLVAQTPA) is a signal peptide. Positions 20–62 (QPTGEGEKGGTIQEPEATEAQDTAAVLMAAGAADGDDSDTKQL) are excised as a propeptide. Cystine bridges form between cysteine 67-cysteine 94, cysteine 69-cysteine 83, and cysteine 73-cysteine 93. The propeptide occupies 97 to 98 (IK).

This sequence belongs to the alpha-defensin family. Highly expressed in intestine, and expressed at lower levels in lung and spleen.

Its subcellular location is the secreted. Its function is as follows. Has antimicrobial activity. In Ornithorhynchus anatinus (Duckbill platypus), this protein is Defensin-A1.